Reading from the N-terminus, the 227-residue chain is Nodulation protein W (227 aa).

The 115-residue stretch at 21 to 135 (IVFVVEDDIS…ELLDAVVAAT (115 aa)) folds into the Response regulatory domain. Asp-70 carries the post-translational modification 4-aspartylphosphate. Positions 151–216 (LKSLFETLSP…DLIRMSETLG (66 aa)) constitute an HTH luxR-type domain. The segment at residues 175–194 (NKQVAAELGLAEITVKIYRG) is a DNA-binding region (H-T-H motif).

In terms of processing, phosphorylated by NodV.

It localises to the cytoplasm. Member of the two-component regulatory system NodV/NodW probably involved in the regulation of the transcription of genes involved in the nodulation process. The chain is Nodulation protein W (nodW) from Bradyrhizobium diazoefficiens (strain JCM 10833 / BCRC 13528 / IAM 13628 / NBRC 14792 / USDA 110).